Reading from the N-terminus, the 284-residue chain is Adenylate kinase 1, chloroplastic (284 aa).

The N-terminal 36 residues, 1 to 36 (MARLVRVARSSSLFGFGNRFYSTSAEASHASSPSPF), are a transit peptide targeting the chloroplast. ATP is bound at residue 61 to 66 (GVGKGT). The tract at residues 81-110 (ATGDLVREELASSGPLSQKLSEIVNQGKLV) is NMP. Residues Thr-82, Arg-87, 108–110 (KLV), 138–141 (GFPR), and Gln-145 contribute to the AMP site. The LID stretch occupies residues 174-222 (GRRTCSQCGKGFNVAHINLKGENGRPGISMDPLLPPHQCMSKLVTRADD). Residue Arg-175 participates in ATP binding. Residues Arg-219 and Arg-230 each coordinate AMP. An ATP-binding site is contributed by Gly-258.

It belongs to the adenylate kinase family. In terms of assembly, monomer. In terms of tissue distribution, highly expressed in flowers and at lower levels in roots, leaves and stems.

Its subcellular location is the plastid. It localises to the chloroplast stroma. It carries out the reaction AMP + ATP = 2 ADP. Catalyzes the reversible transfer of the terminal phosphate group between ATP and AMP. Plays an important role in cellular energy homeostasis, adenine nucleotide metabolism and plant growth. This chain is Adenylate kinase 1, chloroplastic (ADK), found in Arabidopsis thaliana (Mouse-ear cress).